Consider the following 310-residue polypeptide: ADP-L-glycero-D-manno-heptose-6-epimerase (310 aa).

NADP(+) contacts are provided by residues 10–11, 31–32, K38, K53, 75–79, and N92; these read FI, DN, and EGACS. Y140 (proton acceptor) is an active-site residue. Position 144 (K144) interacts with NADP(+). N169 provides a ligand contact to substrate. NADP(+)-binding residues include V170 and K178. The active-site Proton acceptor is K178. Substrate-binding positions include S180, H187, 201 to 204, R209, and Y272; that span reads FSGS.

The protein belongs to the NAD(P)-dependent epimerase/dehydratase family. HldD subfamily. As to quaternary structure, homopentamer. NADP(+) is required as a cofactor.

The catalysed reaction is ADP-D-glycero-beta-D-manno-heptose = ADP-L-glycero-beta-D-manno-heptose. It functions in the pathway nucleotide-sugar biosynthesis; ADP-L-glycero-beta-D-manno-heptose biosynthesis; ADP-L-glycero-beta-D-manno-heptose from D-glycero-beta-D-manno-heptose 7-phosphate: step 4/4. In terms of biological role, catalyzes the interconversion between ADP-D-glycero-beta-D-manno-heptose and ADP-L-glycero-beta-D-manno-heptose via an epimerization at carbon 6 of the heptose. The polypeptide is ADP-L-glycero-D-manno-heptose-6-epimerase (Pectobacterium carotovorum subsp. carotovorum (strain PC1)).